The sequence spans 369 residues: MHGESPIKRRESRKIWVGSVPVGGDAPIAVQSMTNSDTNDVAATVAQINRLEAAGVDIVRVSVPDMDAAEAFGRIKQLVKVPLVADIHFDYRIALRVAELGVDCLRINPGNIGREDRVRAVVDAARDRGIPIRIGVNAGSLEKDLQKKYGEPTPEALVESALRHVEHLERLNFQDFKVSVKASDVFMAVAAYRLLAKQIVQPLHLGITEAGGLRSGTVKSAVGLGMLLAEGIGDTIRISLAADPVEEVKVGYDILKSLRLRSRGINFIACPSCSRQNFDVVKTMNELEGRLEDLLVPLDVAVIGCVVNGPGEAKEAHIGLTGGTPNLIYIDGKPAQKLTNDNLVDELERLIREKAAEKAEADASVIVRG.

Residues cysteine 270, cysteine 273, cysteine 305, and glutamate 312 each coordinate [4Fe-4S] cluster.

This sequence belongs to the IspG family. [4Fe-4S] cluster is required as a cofactor.

The catalysed reaction is (2E)-4-hydroxy-3-methylbut-2-enyl diphosphate + oxidized [flavodoxin] + H2O + 2 H(+) = 2-C-methyl-D-erythritol 2,4-cyclic diphosphate + reduced [flavodoxin]. Its pathway is isoprenoid biosynthesis; isopentenyl diphosphate biosynthesis via DXP pathway; isopentenyl diphosphate from 1-deoxy-D-xylulose 5-phosphate: step 5/6. In terms of biological role, converts 2C-methyl-D-erythritol 2,4-cyclodiphosphate (ME-2,4cPP) into 1-hydroxy-2-methyl-2-(E)-butenyl 4-diphosphate. The polypeptide is 4-hydroxy-3-methylbut-2-en-1-yl diphosphate synthase (flavodoxin) (Pseudomonas savastanoi pv. phaseolicola (strain 1448A / Race 6) (Pseudomonas syringae pv. phaseolicola (strain 1448A / Race 6))).